A 181-amino-acid chain; its full sequence is Probable cobalt-precorrin-6B C(15)-methyltransferase (decarboxylating) (181 aa).

S-adenosyl-L-methionine-binding positions include Thr-16, 40-44, Asp-61, and Ala-89; that span reads GCGSG.

It belongs to the methyltransferase superfamily. Archaeal-type CbiT family.

It carries out the reaction Co-precorrin-6B + S-adenosyl-L-methionine = Co-precorrin-7 + S-adenosyl-L-homocysteine + CO2. Its pathway is cofactor biosynthesis; adenosylcobalamin biosynthesis; cob(II)yrinate a,c-diamide from sirohydrochlorin (anaerobic route): step 8/10. Functionally, catalyzes the methylation of C-15 in cobalt-precorrin-6B followed by the decarboxylation of C-12 to form cobalt-precorrin-7. This Methanococcus maripaludis (strain C7 / ATCC BAA-1331) protein is Probable cobalt-precorrin-6B C(15)-methyltransferase (decarboxylating).